Consider the following 420-residue polypeptide: GDP-mannose transporter 2 (420 aa).

Polar residues predominate over residues methionine 1–proline 11. Residues methionine 1–glycine 21 form a disordered region. Residues methionine 1–proline 76 lie on the Cytoplasmic side of the membrane. A helical membrane pass occupies residues alanine 77–valine 97. The Lumenal segment spans residues asparagine 98–glutamine 106. The helical transmembrane segment at phenylalanine 107–leucine 127 threads the bilayer. Residues alanine 128–lysine 145 are Cytoplasmic-facing. A helical transmembrane segment spans residues alanine 146–leucine 168. Residues serine 169–proline 171 are Lumenal-facing. A helical transmembrane segment spans residues valine 172–glycine 194. The Cytoplasmic segment spans residues histidine 195 to threonine 200. Residues leucine 201–leucine 223 form a helical membrane-spanning segment. The Lumenal portion of the chain corresponds to serine 224–threonine 251. The helical transmembrane segment at methionine 252 to phenylalanine 272 threads the bilayer. Topologically, residues methionine 273–leucine 293 are cytoplasmic. A helical transmembrane segment spans residues leucine 294 to phenylalanine 314. Topologically, residues serine 315–arginine 323 are lumenal. Residues alanine 324–threonine 344 traverse the membrane as a helical segment. The Cytoplasmic segment spans residues alanine 345 to threonine 355. Residues tyrosine 356–glycine 376 form a helical membrane-spanning segment. Topologically, residues aspartate 377–proline 378 are lumenal. Residues valine 379–valine 399 form a helical membrane-spanning segment. The Cytoplasmic segment spans residues alanine 400–alanine 420.

The protein belongs to the TPT transporter family. SLC35D subfamily. As to quaternary structure, homooligomer.

The protein localises to the golgi apparatus membrane. It is found in the cytoplasmic vesicle membrane. It localises to the endoplasmic reticulum membrane. Its function is as follows. Involved in the import of GDP-mannose from the cytoplasm into the Golgi lumen. The chain is GDP-mannose transporter 2 (GMT2) from Cryptococcus neoformans var. neoformans serotype D (strain B-3501A) (Filobasidiella neoformans).